A 320-amino-acid chain; its full sequence is o-succinylbenzoate synthase (320 aa).

The active-site Proton donor is Lys133. Asp161, Glu190, and Asp213 together coordinate Mg(2+). Lys235 serves as the catalytic Proton acceptor.

It belongs to the mandelate racemase/muconate lactonizing enzyme family. MenC type 1 subfamily. Requires a divalent metal cation as cofactor.

It carries out the reaction (1R,6R)-6-hydroxy-2-succinyl-cyclohexa-2,4-diene-1-carboxylate = 2-succinylbenzoate + H2O. Its pathway is quinol/quinone metabolism; 1,4-dihydroxy-2-naphthoate biosynthesis; 1,4-dihydroxy-2-naphthoate from chorismate: step 4/7. The protein operates within quinol/quinone metabolism; menaquinone biosynthesis. Converts 2-succinyl-6-hydroxy-2,4-cyclohexadiene-1-carboxylate (SHCHC) to 2-succinylbenzoate (OSB). The sequence is that of o-succinylbenzoate synthase from Salmonella newport (strain SL254).